We begin with the raw amino-acid sequence, 379 residues long: Succinyl-diaminopimelate desuccinylase (379 aa).

Residue H70 participates in Zn(2+) binding. The active site involves D72. Position 103 (D103) interacts with Zn(2+). The active-site Proton acceptor is the E137. 3 residues coordinate Zn(2+): E138, E166, and H352.

It belongs to the peptidase M20A family. DapE subfamily. In terms of assembly, homodimer. Requires Zn(2+) as cofactor. Co(2+) is required as a cofactor.

The enzyme catalyses N-succinyl-(2S,6S)-2,6-diaminopimelate + H2O = (2S,6S)-2,6-diaminopimelate + succinate. Its pathway is amino-acid biosynthesis; L-lysine biosynthesis via DAP pathway; LL-2,6-diaminopimelate from (S)-tetrahydrodipicolinate (succinylase route): step 3/3. In terms of biological role, catalyzes the hydrolysis of N-succinyl-L,L-diaminopimelic acid (SDAP), forming succinate and LL-2,6-diaminopimelate (DAP), an intermediate involved in the bacterial biosynthesis of lysine and meso-diaminopimelic acid, an essential component of bacterial cell walls. The protein is Succinyl-diaminopimelate desuccinylase of Burkholderia ambifaria (strain MC40-6).